Here is a 451-residue protein sequence, read N- to C-terminus: MLGIVVSHADAASMHIGEHLRSLRDWETSVDETRPDDEGGGTVYQIDSVELREFEALHLDIENVAAAFDDPDLLVFASKHAGETDELLTAHHTGNFGVAEHGGEDGQFARACPGAHKAVVSALQRHAPPDYEVGMECTHHGPTAVGVPSMFVEVGSAEPQWEDPDAAEAAARAILDLADEPADRPRENGTRRHLLGVGGGHYAPRFERVVRETDWAVGHIAANWSLDALAEWADSDEERDTVLDRAFRASAADYALMEGDRPDLTAAIESLGYRVVSETFVQEATGVNLGLVEALEDAIRPVDEGLRFGALAPGYDGEWTVLDLPKELISDVRGVDSEALRDTIERQSIAYATEQNGTVVTGPIVCPATTELEAVVDPLVEILKQRFDSVERNADELVARETAFDPDLARTADIPEGPKFGKLASGESVEIDGEEIDPERFQRERIRRYTL.

A disordered region spans residues 410–437 (RTADIPEGPKFGKLASGESVEIDGEEID).

It belongs to the DtdA deacylase family. In terms of assembly, monomer. Zn(2+) is required as a cofactor.

The enzyme catalyses a D-aminoacyl-tRNA + H2O = a tRNA + a D-alpha-amino acid + H(+). It catalyses the reaction glycyl-tRNA(Ala) + H2O = tRNA(Ala) + glycine + H(+). Functionally, D-aminoacyl-tRNA deacylase with broad substrate specificity. By recycling D-aminoacyl-tRNA to D-amino acids and free tRNA molecules, this enzyme counteracts the toxicity associated with the formation of D-aminoacyl-tRNA entities in vivo. This Haloarcula marismortui (strain ATCC 43049 / DSM 3752 / JCM 8966 / VKM B-1809) (Halobacterium marismortui) protein is D-aminoacyl-tRNA deacylase.